The chain runs to 136 residues: MSALVYFSSSSENTHRFMQRLGLPATRIPLNERERIQVDEPYILVVPSYGGGGMAGAVPRQVIRFLNDEHNRARIRGVIASGNRNFGDAWGCAGDVIAQKCGVPWLYRFELMGTQRDIDNVRKGVNEFWQQLSRSA.

This sequence belongs to the NrdI family.

In terms of biological role, probably involved in ribonucleotide reductase function. The protein is Protein NrdI of Salmonella paratyphi B (strain ATCC BAA-1250 / SPB7).